The following is a 502-amino-acid chain: L-amino-acid oxidase BmooLAAO-I (502 aa).

An N-terminal signal peptide occupies residues 1 to 18 (MNVFFTFSLLFLAALGSC). Cysteine 28 and cysteine 191 are disulfide-bonded. Residues 61–62 (MS), 81–82 (EA), arginine 89, and 105–108 (GPMR) contribute to the FAD site. Arginine 108 is a substrate binding site. Asparagine 190 is a glycosylation site (N-linked (GlcNAc...) asparagine). Histidine 241 provides a ligand contact to substrate. Valine 279 is a binding site for FAD. Cysteines 349 and 430 form a disulfide. Substrate is bound at residue tyrosine 390. FAD-binding positions include glutamate 475 and 482–487 (GWIDST). Substrate is bound at residue 482 to 483 (GW).

This sequence belongs to the flavin monoamine oxidase family. FIG1 subfamily. In terms of assembly, homodimer; non-covalently linked. FAD serves as cofactor. In terms of processing, N-glycosylated. The enzymatic activity is not affected by deglycosylation. Expressed by the venom gland.

The protein localises to the secreted. The enzyme catalyses an L-alpha-amino acid + O2 + H2O = a 2-oxocarboxylate + H2O2 + NH4(+). The catalysed reaction is L-leucine + O2 + H2O = 4-methyl-2-oxopentanoate + H2O2 + NH4(+). It carries out the reaction L-phenylalanine + O2 + H2O = 3-phenylpyruvate + H2O2 + NH4(+). It catalyses the reaction L-tryptophan + O2 + H2O = indole-3-pyruvate + H2O2 + NH4(+). The enzyme catalyses L-methionine + O2 + H2O = 4-methylsulfanyl-2-oxobutanoate + H2O2 + NH4(+). The catalysed reaction is L-isoleucine + O2 + H2O = (S)-3-methyl-2-oxopentanoate + H2O2 + NH4(+). It carries out the reaction L-histidine + O2 + H2O = 3-(imidazol-5-yl)pyruvate + H2O2 + NH4(+). It catalyses the reaction L-tyrosine + O2 + H2O = 3-(4-hydroxyphenyl)pyruvate + H2O2 + NH4(+). The enzyme catalyses L-alanine + O2 + H2O = pyruvate + H2O2 + NH4(+). The catalysed reaction is L-valine + O2 + H2O = 3-methyl-2-oxobutanoate + H2O2 + NH4(+). Its activity is regulated as follows. Its enzymatic activities is reduced when it is exposed to Ca(2+), Zn(2+), Al(3+), Cu(2+) or Ni(2+) salts. Functionally, catalyzes an oxidative deamination of predominantly hydrophobic and aromatic L-amino acids, thus producing hydrogen peroxide that may contribute to the toxicity of the venom. Shows very high activity on L-Met, and L-Leu, high activity on L-Ile, L-Phe and L-Tyr and moderate activity on L-His, L-Val and L-Ala. Exhibits diverse biological activities, such as edema, apoptosis of tumor cell lines, antibacterial activities against both Gram-positive and Gram-negative bacteria, as well as induction of platelet aggregation. Effects of snake L-amino oxidases on platelets are controversial, since they either induce aggregation or inhibit agonist-induced aggregation. These different effects are probably due to different experimental conditions. Unlike other snake venom L-amino acid oxidases, does not induce hemorrhage. It may also induce hemolysis. Has parasiticidal activities against and leishmania, as a result of enzyme-catalyzed hydrogen peroxide production. The sequence is that of L-amino-acid oxidase BmooLAAO-I from Bothrops moojeni (Lance-headed viper).